Here is a 656-residue protein sequence, read N- to C-terminus: UvrABC system protein B (656 aa).

The region spanning 23–180 (EGIKKGYRFQ…QHLAKIGYER (158 aa)) is the Helicase ATP-binding domain. 36-43 (GVTGSGKT) is an ATP binding site. A Beta-hairpin motif is present at residues 89–112 (YYDYYQPEAYVPTKDLYIEKNADI). Residues 426-588 (QVDDLISEIK…ITPKTIVKPL (163 aa)) enclose the Helicase C-terminal domain. One can recognise a UVR domain in the interval 614-649 (EEYLSLLEEEMYRAASELRYEDAAKLRDEIFRLREE).

This sequence belongs to the UvrB family. Forms a heterotetramer with UvrA during the search for lesions. Interacts with UvrC in an incision complex.

The protein resides in the cytoplasm. In terms of biological role, the UvrABC repair system catalyzes the recognition and processing of DNA lesions. A damage recognition complex composed of 2 UvrA and 2 UvrB subunits scans DNA for abnormalities. Upon binding of the UvrA(2)B(2) complex to a putative damaged site, the DNA wraps around one UvrB monomer. DNA wrap is dependent on ATP binding by UvrB and probably causes local melting of the DNA helix, facilitating insertion of UvrB beta-hairpin between the DNA strands. Then UvrB probes one DNA strand for the presence of a lesion. If a lesion is found the UvrA subunits dissociate and the UvrB-DNA preincision complex is formed. This complex is subsequently bound by UvrC and the second UvrB is released. If no lesion is found, the DNA wraps around the other UvrB subunit that will check the other stand for damage. This is UvrABC system protein B from Pseudothermotoga lettingae (strain ATCC BAA-301 / DSM 14385 / NBRC 107922 / TMO) (Thermotoga lettingae).